Here is a 79-residue protein sequence, read N- to C-terminus: Endothelin-2 (79 aa).

The tract at residues 1–23 is disordered; sequence PEQTAPYGLGNPPRRRRRSLPRR. Residues 24–39 form an endothelin-like region; the sequence is CQCSSARDPSCATFCL. The tract at residues 51-79 is disordered; it reads SRKSPADVFQTGKTGATRGELLQRLRDIS.

The protein belongs to the endothelin/sarafotoxin family.

The protein resides in the secreted. Its function is as follows. Endothelins are endothelium-derived vasoconstrictor peptides. The sequence is that of Endothelin-2 (EDN2) from Macaca fascicularis (Crab-eating macaque).